The following is a 467-amino-acid chain: UDP-N-acetylmuramate--L-alanine ligase (467 aa).

114 to 120 (GTHGKTT) contacts ATP.

It belongs to the MurCDEF family.

It is found in the cytoplasm. The enzyme catalyses UDP-N-acetyl-alpha-D-muramate + L-alanine + ATP = UDP-N-acetyl-alpha-D-muramoyl-L-alanine + ADP + phosphate + H(+). The protein operates within cell wall biogenesis; peptidoglycan biosynthesis. Its function is as follows. Cell wall formation. In Rhodopseudomonas palustris (strain BisA53), this protein is UDP-N-acetylmuramate--L-alanine ligase.